Here is a 164-residue protein sequence, read N- to C-terminus: Ribosome maturation factor RimP (164 aa).

It belongs to the RimP family.

It is found in the cytoplasm. Its function is as follows. Required for maturation of 30S ribosomal subunits. This chain is Ribosome maturation factor RimP, found in Mesoplasma florum (strain ATCC 33453 / NBRC 100688 / NCTC 11704 / L1) (Acholeplasma florum).